Here is a 273-residue protein sequence, read N- to C-terminus: Large ribosomal subunit protein uL2 (273 aa).

The interval 228–273 (IDHPHGGGEGKTSGGRHPVTPWGFSTKGKKTRKNKRTSKFIVKKRK) is disordered. Over residues 254–273 (KGKKTRKNKRTSKFIVKKRK) the composition is skewed to basic residues.

Belongs to the universal ribosomal protein uL2 family. Part of the 50S ribosomal subunit. Forms a bridge to the 30S subunit in the 70S ribosome.

One of the primary rRNA binding proteins. Required for association of the 30S and 50S subunits to form the 70S ribosome, for tRNA binding and peptide bond formation. It has been suggested to have peptidyltransferase activity; this is somewhat controversial. Makes several contacts with the 16S rRNA in the 70S ribosome. The protein is Large ribosomal subunit protein uL2 of Rickettsia typhi (strain ATCC VR-144 / Wilmington).